The following is a 583-amino-acid chain: Sensor protein SrrB (583 aa).

Residues 1–11 (MMSRLNSVVIK) lie on the Cytoplasmic side of the membrane. The helical transmembrane segment at 12–32 (LWLTIILIVTTVLILLSIALI) threads the bilayer. Residues 33–174 (TFMQYYFTQE…SIEDTNNAIT (142 aa)) lie on the Extracellular side of the membrane. A helical transmembrane segment spans residues 175–195 (IITIITAVIFLTITTVFAFFL). Residues 196-583 (SSRITKPLRR…TFIIKLPKPE (388 aa)) are Cytoplasmic-facing. In terms of domain architecture, HAMP spans 197–249 (SRITKPLRRLRDQATRVSEGDYSYKPSVTTKDEIGQLSQAFNQMSTEIEEHVD). Positions 366–583 (NVSHELRTPI…TFIIKLPKPE (218 aa)) constitute a Histidine kinase domain. His-369 carries the phosphohistidine; by autocatalysis modification.

The protein resides in the cell membrane. It catalyses the reaction ATP + protein L-histidine = ADP + protein N-phospho-L-histidine.. Its function is as follows. Member of the two-component regulatory system SrrA/SrrB, which is involved in the global regulation of staphylococcal virulence factors in response to environmental oxygen levels as well as biofilm formation. Also plays an essential role in host-derived nitric oxide resistance by regulating hmp/flavohemoglobin, an enzyme that detoxifies nitric oxide by converting it to nitrate. Functions as a sensor protein kinase which is autophosphorylated at a histidine residue and transfers its phosphate group to SrrA. In turn, SrrA binds to the upstream promoter regions of the target genes to positively and negatively regulate their expression. This is Sensor protein SrrB (srrB) from Staphylococcus aureus.